Consider the following 453-residue polypeptide: tRNA modification GTPase MnmE (453 aa).

Residues Arg-22, Glu-79, and Lys-119 each coordinate (6S)-5-formyl-5,6,7,8-tetrahydrofolate. Residues 215–376 (GMKVVIAGRP…LKQHLKSLMG (162 aa)) form the TrmE-type G domain. K(+) is bound at residue Asn-225. Residues 225–230 (NAGKSS), 244–250 (TEIAGTT), 269–272 (DTAG), and 334–337 (NKAD) contribute to the GTP site. Ser-229 lines the Mg(2+) pocket. K(+)-binding residues include Thr-244, Ile-246, and Thr-249. Residue Thr-250 coordinates Mg(2+). Residue Lys-453 coordinates (6S)-5-formyl-5,6,7,8-tetrahydrofolate.

The protein belongs to the TRAFAC class TrmE-Era-EngA-EngB-Septin-like GTPase superfamily. TrmE GTPase family. In terms of assembly, homodimer. Heterotetramer of two MnmE and two MnmG subunits. Requires K(+) as cofactor.

Its subcellular location is the cytoplasm. Functionally, exhibits a very high intrinsic GTPase hydrolysis rate. Involved in the addition of a carboxymethylaminomethyl (cmnm) group at the wobble position (U34) of certain tRNAs, forming tRNA-cmnm(5)s(2)U34. This chain is tRNA modification GTPase MnmE, found in Shewanella denitrificans (strain OS217 / ATCC BAA-1090 / DSM 15013).